Here is a 621-residue protein sequence, read N- to C-terminus: uncharacterized protein (621 aa).

4 stretches are compositionally biased toward low complexity: residues 1-10, 63-79, 137-182, and 309-347; these read MIEDNINNNE, TEPL…TTPS, NNNN…NNFN, and NQSI…NNNN. Disordered regions lie at residues 1–29, 63–100, 135–194, 307–374, 430–471, 492–539, and 594–614; these read MIED…DKNN, TEPL…SNKT, DDNN…KDND, KTNQ…EDDT, YNNN…IAKR, KQSQ…IKII, and PTQI…SPSK. Polar residues predominate over residues 348–357; the sequence is STLTSSNSLS. 3 stretches are compositionally biased toward low complexity: residues 431-459, 496-539, and 597-613; these read NNNN…NNNN, NNNN…IKII, and INSN…SSPS.

This is an uncharacterized protein from Dictyostelium discoideum (Social amoeba).